The chain runs to 468 residues: 3-isopropylmalate dehydratase large subunit (468 aa).

3 residues coordinate [4Fe-4S] cluster: C349, C409, and C412.

Belongs to the aconitase/IPM isomerase family. LeuC type 1 subfamily. As to quaternary structure, heterodimer of LeuC and LeuD. Requires [4Fe-4S] cluster as cofactor.

The enzyme catalyses (2R,3S)-3-isopropylmalate = (2S)-2-isopropylmalate. Its pathway is amino-acid biosynthesis; L-leucine biosynthesis; L-leucine from 3-methyl-2-oxobutanoate: step 2/4. Functionally, catalyzes the isomerization between 2-isopropylmalate and 3-isopropylmalate, via the formation of 2-isopropylmaleate. This chain is 3-isopropylmalate dehydratase large subunit, found in Nitrobacter winogradskyi (strain ATCC 25391 / DSM 10237 / CIP 104748 / NCIMB 11846 / Nb-255).